The primary structure comprises 117 residues: Prefoldin subunit beta (117 aa).

The protein belongs to the prefoldin subunit beta family. In terms of assembly, heterohexamer of two alpha and four beta subunits.

It is found in the cytoplasm. In terms of biological role, molecular chaperone capable of stabilizing a range of proteins. Seems to fulfill an ATP-independent, HSP70-like function in archaeal de novo protein folding. The chain is Prefoldin subunit beta (pfdB) from Methanosarcina acetivorans (strain ATCC 35395 / DSM 2834 / JCM 12185 / C2A).